The sequence spans 554 residues: Propanediol dehydratase large subunit (554 aa).

The protein belongs to the diol/glycerol dehydratase large subunit family. The propanediol dehydratase enzyme is a heterotrimeric complex composed of a large (PduC), a medium (PduD) and a small (PduE) subunit. Requires adenosylcob(III)alamin as cofactor.

It is found in the bacterial microcompartment. The enzyme catalyses propane-1,2-diol = propanal + H2O. The protein operates within polyol metabolism; 1,2-propanediol degradation. Inhibited by glycerol. Its function is as follows. Part of the PduCDE complex that catalyzes the dehydration of 1,2-propanediol (1,2-PD) to propionaldehyde. Required for S.typhimurium growth on 1,2-PD as the sole carbon and energy source. This subunit is directly targeted to the BMC. Functionally, the 1,2-PD-specific bacterial microcompartment (BMC) concentrates low levels of 1,2-PD catabolic enzymes, concentrates volatile reaction intermediates thus enhancing pathway flux and keeps the level of toxic, mutagenic propionaldehyde low. In Salmonella typhimurium (strain LT2 / SGSC1412 / ATCC 700720), this protein is Propanediol dehydratase large subunit.